The primary structure comprises 76 residues: Small proline-rich protein 2F (76 aa).

Repeat copies occupy residues 21–29 (PKCPEPCSP), 30–38 (SVCPEPCPP), and 39–47 (PKCPEPCPE). The 3 X 9 AA approximate tandem repeats stretch occupies residues 21-47 (PKCPEPCSPSVCPEPCPPPKCPEPCPE). Positions 53-76 (SFQQKCPPVQPPPPCQQKCPPKSK) are disordered.

It belongs to the cornifin (SPRR) family. In terms of tissue distribution, expressed in uterus.

The protein localises to the cytoplasm. Its function is as follows. Cross-linked envelope protein of keratinocytes. It is a keratinocyte protein that first appears in the cell cytosol, but ultimately becomes cross-linked to membrane proteins by transglutaminase. All that results in the formation of an insoluble envelope beneath the plasma membrane. This Mus musculus (Mouse) protein is Small proline-rich protein 2F (Sprr2f).